A 224-amino-acid polypeptide reads, in one-letter code: Synaptogyrin-2 (224 aa).

Methionine 1 is subject to N-acetylmethionine. A Phosphoserine modification is found at serine 3. Residues 20-171 (FLTQPQVVAR…LASLAYQRYK (152 aa)) enclose the MARVEL domain. 4 consecutive transmembrane segments (helical) span residues 26–46 (VVAR…IYGE), 73–93 (AIGV…AYFP), 105–125 (VIGD…GFCF), and 147–167 (AAIT…SLAY).

This sequence belongs to the synaptogyrin family. In terms of assembly, (Microbial infection) Interacts with SFTS phlebovirus protein NSs; may be involved in virus replication. Post-translationally, may be tyrosine phosphorylated by Src. Ubiquitous; low expression in brain.

The protein localises to the cytoplasmic vesicle membrane. It localises to the cytoplasmic vesicle. The protein resides in the secretory vesicle. Its subcellular location is the synaptic vesicle membrane. It is found in the lipid droplet. Functionally, may play a role in regulated exocytosis. In neuronal cells, modulates the localization of synaptophysin/SYP into synaptic-like microvesicles and may therefore play a role in the formation and/or the maturation of this vesicles. May also play a role in GLUT4 storage and transport to the plasma membrane. (Microbial infection) May play a role in the assembly of cytoplasmic inclusion bodies required for SFTS phlebovirus replication. In Homo sapiens (Human), this protein is Synaptogyrin-2.